Here is a 368-residue protein sequence, read N- to C-terminus: CCA-adding enzyme (368 aa).

Residues Gly-8 and Arg-11 each contribute to the ATP site. CTP is bound by residues Gly-8 and Arg-11. Mg(2+) contacts are provided by Asp-21 and Asp-23. Residues Arg-91, Arg-137, and Arg-140 each contribute to the ATP site. CTP is bound by residues Arg-91, Arg-137, and Arg-140.

Belongs to the tRNA nucleotidyltransferase/poly(A) polymerase family. Bacterial CCA-adding enzyme type 2 subfamily. Mg(2+) serves as cofactor.

It carries out the reaction a tRNA precursor + 2 CTP + ATP = a tRNA with a 3' CCA end + 3 diphosphate. It catalyses the reaction a tRNA with a 3' CCA end + 2 CTP + ATP = a tRNA with a 3' CCACCA end + 3 diphosphate. Functionally, catalyzes the addition and repair of the essential 3'-terminal CCA sequence in tRNAs without using a nucleic acid template. Adds these three nucleotides in the order of C, C, and A to the tRNA nucleotide-73, using CTP and ATP as substrates and producing inorganic pyrophosphate. tRNA 3'-terminal CCA addition is required both for tRNA processing and repair. Also involved in tRNA surveillance by mediating tandem CCA addition to generate a CCACCA at the 3' terminus of unstable tRNAs. While stable tRNAs receive only 3'-terminal CCA, unstable tRNAs are marked with CCACCA and rapidly degraded. The polypeptide is CCA-adding enzyme (Pseudomonas putida (strain ATCC 700007 / DSM 6899 / JCM 31910 / BCRC 17059 / LMG 24140 / F1)).